Here is a 1085-residue protein sequence, read N- to C-terminus: Error-prone DNA polymerase (1085 aa).

The protein belongs to the DNA polymerase type-C family. DnaE2 subfamily.

The protein resides in the cytoplasm. The enzyme catalyses DNA(n) + a 2'-deoxyribonucleoside 5'-triphosphate = DNA(n+1) + diphosphate. In terms of biological role, DNA polymerase involved in damage-induced mutagenesis and translesion synthesis (TLS). It is not the major replicative DNA polymerase. In Symbiobacterium thermophilum (strain DSM 24528 / JCM 14929 / IAM 14863 / T), this protein is Error-prone DNA polymerase.